The primary structure comprises 332 residues: Fructose-1,6-bisphosphatase class 1 (332 aa).

4 residues coordinate Mg(2+): E94, D116, L118, and D119. Substrate contacts are provided by residues 119–122, N211, Y239, 257–259, and K269; these read DGSS and YLY. Residue E275 coordinates Mg(2+).

This sequence belongs to the FBPase class 1 family. In terms of assembly, homotetramer. Requires Mg(2+) as cofactor.

The protein resides in the cytoplasm. It carries out the reaction beta-D-fructose 1,6-bisphosphate + H2O = beta-D-fructose 6-phosphate + phosphate. It functions in the pathway carbohydrate biosynthesis; Calvin cycle. The sequence is that of Fructose-1,6-bisphosphatase class 1 from Synechococcus sp. (strain JA-3-3Ab) (Cyanobacteria bacterium Yellowstone A-Prime).